Here is a 621-residue protein sequence, read N- to C-terminus: Glucose 1,6-bisphosphate synthase (621 aa).

Alpha-D-glucose 1,6-bisphosphate is bound by residues R73 and S175. The Phosphoserine intermediate role is filled by S175. 4 residues coordinate Mg(2+): S175, D332, D334, and D336. S175 is subject to Phosphoserine. Positions 336, 337, 433, 435, and 447 each coordinate alpha-D-glucose 1,6-bisphosphate.

This sequence belongs to the phosphohexose mutase family. In terms of tissue distribution, expressed at highest levels in the brain and testis, at intermediate levels in thymus, spleen, lung and skeletal muscle, and at lowest levels in kidney, liver and heart.

The protein localises to the cytoplasm. It localises to the cytosol. The catalysed reaction is (2R)-3-phospho-glyceroyl phosphate + alpha-D-glucose 1-phosphate = alpha-D-glucose 1,6-bisphosphate + (2R)-3-phosphoglycerate + H(+). The enzyme catalyses alpha-D-glucose 6-phosphate + (2R)-3-phospho-glyceroyl phosphate = alpha-D-glucose 1,6-bisphosphate + (2R)-3-phosphoglycerate + H(+). It carries out the reaction (2R)-3-phospho-glyceroyl phosphate + alpha-D-ribose 1-phosphate = alpha-D-ribose 1,5-bisphosphate + (2R)-3-phosphoglycerate + H(+). It catalyses the reaction 2-deoxy-alpha-D-ribose 1-phosphate + (2R)-3-phospho-glyceroyl phosphate = 2-deoxy-alpha-D-ribose 1,5-bisphosphate + (2R)-3-phosphoglycerate + H(+). The catalysed reaction is (2R)-3-phospho-glyceroyl phosphate + alpha-D-mannose 1-phosphate = alpha-D-mannose 1,6-bisphosphate + (2R)-3-phosphoglycerate + H(+). Functionally, glucose 1,6-bisphosphate synthase using 1,3-bisphosphoglycerate as a phosphate donor and a series of 1-phosphate sugars, including glucose 1-phosphate, mannose 1-phosphate, ribose 1-phosphate and deoxyribose 1-phosphate, as acceptors. In vitro, also exhibits very low phosphopentomutase and phosphoglucomutase activity which are most probably not physiologically relevant. This is Glucose 1,6-bisphosphate synthase from Mus musculus (Mouse).